The sequence spans 278 residues: Large ribosomal subunit protein uL2 (278 aa).

The disordered stretch occupies residues 224-262 (VMNPVDHPLGGGEGRTSGGRHPVTPWGKPTKGFKTRKTR).

This sequence belongs to the universal ribosomal protein uL2 family. As to quaternary structure, part of the 50S ribosomal subunit. Forms a bridge to the 30S subunit in the 70S ribosome.

One of the primary rRNA binding proteins. Required for association of the 30S and 50S subunits to form the 70S ribosome, for tRNA binding and peptide bond formation. It has been suggested to have peptidyltransferase activity; this is somewhat controversial. Makes several contacts with the 16S rRNA in the 70S ribosome. The protein is Large ribosomal subunit protein uL2 of Leptospira biflexa serovar Patoc (strain Patoc 1 / Ames).